The chain runs to 396 residues: Enoyl-[acyl-carrier-protein] reductase [NADH] (396 aa).

NAD(+) is bound by residues 47-52, 73-74, 110-111, and 138-139; these read GASTGF, FE, DA, and LA. Tyrosine 224 is a binding site for substrate. The active-site Proton donor is the tyrosine 234. NAD(+) is bound by residues lysine 243 and 272–274; that span reads LVT.

Belongs to the TER reductase family. As to quaternary structure, monomer.

The catalysed reaction is a 2,3-saturated acyl-[ACP] + NAD(+) = a (2E)-enoyl-[ACP] + NADH + H(+). The protein operates within lipid metabolism; fatty acid biosynthesis. Functionally, involved in the final reduction of the elongation cycle of fatty acid synthesis (FAS II). Catalyzes the reduction of a carbon-carbon double bond in an enoyl moiety that is covalently linked to an acyl carrier protein (ACP). In Flavobacterium psychrophilum (strain ATCC 49511 / DSM 21280 / CIP 103535 / JIP02/86), this protein is Enoyl-[acyl-carrier-protein] reductase [NADH].